We begin with the raw amino-acid sequence, 66 residues long: Large ribosomal subunit protein bL35 (66 aa).

Residues 1–22 (MAYKLKSHRGAAKRFKKTASGG) form a disordered region.

The protein belongs to the bacterial ribosomal protein bL35 family.

In Pseudoalteromonas translucida (strain TAC 125), this protein is Large ribosomal subunit protein bL35.